The primary structure comprises 403 residues: Metacaspase-1A (403 aa).

Residues 1–93 are disordered; sequence MQHHHHSSYG…PPTDPVAFGH (93 aa). A compositionally biased stretch (low complexity) spans 18–31; it reads GQAYRQQQPYYGQP. Pro residues predominate over residues 32 to 55; the sequence is SPQPYAQPPPPNYQRPSGYGPPPS. Residues His194 and Cys250 contribute to the active site.

It belongs to the peptidase C14B family.

In terms of biological role, involved in cell death (apoptosis). This chain is Metacaspase-1A (casA), found in Aspergillus terreus (strain NIH 2624 / FGSC A1156).